A 618-amino-acid polypeptide reads, in one-letter code: UvrABC system protein C (618 aa).

The GIY-YIG domain occupies Asp-13–Ile-92. Residues Leu-204–Ile-239 enclose the UVR domain.

This sequence belongs to the UvrC family. In terms of assembly, interacts with UvrB in an incision complex.

It localises to the cytoplasm. In terms of biological role, the UvrABC repair system catalyzes the recognition and processing of DNA lesions. UvrC both incises the 5' and 3' sides of the lesion. The N-terminal half is responsible for the 3' incision and the C-terminal half is responsible for the 5' incision. The sequence is that of UvrABC system protein C from Clostridium botulinum (strain Kyoto / Type A2).